A 719-amino-acid polypeptide reads, in one-letter code: Pesticidal crystal protein Cry1Ib (719 aa).

This sequence belongs to the delta endotoxin family.

Functionally, promotes colloidosmotic lysis by binding to the midgut epithelial cells of certain coleopteran and lepidopteran species. Active on Plutella xylostella but not on Bombyx mori. The chain is Pesticidal crystal protein Cry1Ib (cry1Ib) from Bacillus thuringiensis subsp. entomocidus.